The sequence spans 216 residues: UPF0502 protein VCM66_A0698 (216 aa).

It belongs to the UPF0502 family.

The sequence is that of UPF0502 protein VCM66_A0698 from Vibrio cholerae serotype O1 (strain M66-2).